The primary structure comprises 431 residues: Serine--tRNA ligase (431 aa).

235-237 (TSE) contributes to the L-serine binding site. 266-268 (RSE) is a binding site for ATP. Glutamate 289 is an L-serine binding site. An ATP-binding site is contributed by 353-356 (EISS). Residue serine 388 coordinates L-serine.

The protein belongs to the class-II aminoacyl-tRNA synthetase family. Type-1 seryl-tRNA synthetase subfamily. In terms of assembly, homodimer. The tRNA molecule binds across the dimer.

The protein resides in the cytoplasm. The catalysed reaction is tRNA(Ser) + L-serine + ATP = L-seryl-tRNA(Ser) + AMP + diphosphate + H(+). It carries out the reaction tRNA(Sec) + L-serine + ATP = L-seryl-tRNA(Sec) + AMP + diphosphate + H(+). The protein operates within aminoacyl-tRNA biosynthesis; selenocysteinyl-tRNA(Sec) biosynthesis; L-seryl-tRNA(Sec) from L-serine and tRNA(Sec): step 1/1. In terms of biological role, catalyzes the attachment of serine to tRNA(Ser). Is also able to aminoacylate tRNA(Sec) with serine, to form the misacylated tRNA L-seryl-tRNA(Sec), which will be further converted into selenocysteinyl-tRNA(Sec). The polypeptide is Serine--tRNA ligase (Paraburkholderia phytofirmans (strain DSM 17436 / LMG 22146 / PsJN) (Burkholderia phytofirmans)).